A 526-amino-acid polypeptide reads, in one-letter code: Lysine--tRNA ligase (526 aa).

The 'HIGH' region signature appears at P30 to N38. Residues D95, C99, H100, H106, C177, and C199 each contribute to the Zn(2+) site. Positions K280–S284 match the 'KMSKS' region motif.

The protein belongs to the class-I aminoacyl-tRNA synthetase family. The cofactor is Zn(2+).

It is found in the cytoplasm. The catalysed reaction is tRNA(Lys) + L-lysine + ATP = L-lysyl-tRNA(Lys) + AMP + diphosphate. This chain is Lysine--tRNA ligase (lysS), found in Thermococcus kodakarensis (strain ATCC BAA-918 / JCM 12380 / KOD1) (Pyrococcus kodakaraensis (strain KOD1)).